The sequence spans 314 residues: uncharacterized protein (314 aa).

A signal peptide spans methionine 1–serine 18. Residues asparagine 68, asparagine 72, asparagine 106, and asparagine 256 are each glycosylated (N-linked (GlcNAc...) asparagine).

It is found in the secreted. This is an uncharacterized protein from Caenorhabditis elegans.